Here is a 177-residue protein sequence, read N- to C-terminus: Protein YOP1 (177 aa).

The Cytoplasmic segment spans residues 1-35 (MADVISSLQTQLKELDTKFAGNNVLNQLEQRTNLP). A helical transmembrane segment spans residues 36-55 (KSYLVVGSTIFYLLLIFINV). Residues 56-57 (GG) lie on the Lumenal side of the membrane. The helical transmembrane segment at 58–78 (IGEILGNFAGFVIPAYYSILA) threads the bilayer. The Cytoplasmic segment spans residues 79–88 (LKTTTTKDDT). A helical membrane pass occupies residues 89–103 (QLLTYWIVFSFLNVI). Topologically, residues 104–108 (EFWSK) are lumenal. A helical transmembrane segment spans residues 109–127 (ALLYIIPFYWFLKTIFLLY). Topologically, residues 128–177 (IALPQTGGATMIYNRFISPLTDKYILGPKKTDGVQQSVKEASRATGAATH) are cytoplasmic.

The protein belongs to the DP1 family. As to quaternary structure, oligomer.

The protein localises to the endoplasmic reticulum membrane. The protein resides in the golgi apparatus membrane. Its function is as follows. Required to generate and maintain the structure of the tubular endoplasmic reticulum network and the vacuole. Induces high curvature in membranes and causes membrane tubule formation. Involved in membrane/vesicle trafficking. The protein is Protein YOP1 (YOP1) of Candida glabrata (strain ATCC 2001 / BCRC 20586 / JCM 3761 / NBRC 0622 / NRRL Y-65 / CBS 138) (Yeast).